We begin with the raw amino-acid sequence, 140 residues long: uncharacterized protein (140 aa).

Belongs to the asfivirus D129L family.

This is an uncharacterized protein from African swine fever virus (isolate Pig/Kenya/KEN-50/1950) (ASFV).